Reading from the N-terminus, the 740-residue chain is Catalase-peroxidase (740 aa).

Residues 1–16 (MSENHDAIVTDAKTEE) show a composition bias toward basic and acidic residues. Positions 1-38 (MSENHDAIVTDAKTEETDGCPVAHGRAPHPTQGGGNRQ) are disordered. The tryptophyl-tyrosyl-methioninium (Trp-Tyr) (with M-257) cross-link spans 108–231 (WHSAGTYRIS…LGAVQMGLIY (124 aa)). The active-site Proton acceptor is the histidine 109. The segment at residues 231-257 (YVNPEGPNGNPDPIAAARDIRETFRRM) is a cross-link (tryptophyl-tyrosyl-methioninium (Tyr-Met) (with W-108)). Histidine 272 is a binding site for heme b.

Belongs to the peroxidase family. Peroxidase/catalase subfamily. Homodimer. The cofactor is heme b. In terms of processing, formation of the three residue Trp-Tyr-Met cross-link is important for the catalase, but not the peroxidase activity of the enzyme.

The enzyme catalyses H2O2 + AH2 = A + 2 H2O. It catalyses the reaction 2 H2O2 = O2 + 2 H2O. Its function is as follows. Bifunctional enzyme with both catalase and broad-spectrum peroxidase activity. The protein is Catalase-peroxidase of Streptomyces coelicolor (strain ATCC BAA-471 / A3(2) / M145).